Here is a 394-residue protein sequence, read N- to C-terminus: MTDIGESESDISTDVSALPMLSHSVSYTSIQKPPFVVSVIGSGNWGTTVAKIIAENTRENPLLFEQKVRMWVYEEEFEGSNLSDIINTEHVNKKYLPGIKLPDNLVAVPDLLEAVQYSNILIFNIPHQHLEKILSQLRGNIDPRARAISCLKGLRVNLDGVELLPDIIQDALGIHCGVLAGANLAQEVAEQRFSETTVGYPLPADYKPGDVDHTVLYTLFHRPYFHVHVIEDIAGISCAGALKNIIAISVGFVEGLEWGDNAKAAMLRRGLLEMIKFGRKFFPGCLVSSFTEESAGVADLFTTCTGGRNFKLAKIMAQTGKSAHEVEKEILNGQSAQGLITAKEIHELIKNKGCEEEFPLFETTYQILFHGVRIGILPYMLENKWSISKPNYSS.

Residues 41-46 (GSGNWG), Lys-152, and Ala-185 each bind NAD(+). Residue Lys-152 coordinates substrate. Lys-243 serves as the catalytic Proton acceptor. Residues Arg-308 and Gln-337 each contribute to the NAD(+) site. 308 to 309 (RN) lines the substrate pocket.

Belongs to the NAD-dependent glycerol-3-phosphate dehydrogenase family.

The catalysed reaction is sn-glycerol 3-phosphate + NAD(+) = dihydroxyacetone phosphate + NADH + H(+). In Cyberlindnera jadinii (Torula yeast), this protein is Glycerol-3-phosphate dehydrogenase [NAD(+)] 2 (gpd2).